Here is a 308-residue protein sequence, read N- to C-terminus: Tetraacyldisaccharide 4'-kinase (308 aa).

63 to 70 lines the ATP pocket; it reads SFGGNGKT.

This sequence belongs to the LpxK family.

The catalysed reaction is a lipid A disaccharide + ATP = a lipid IVA + ADP + H(+). It functions in the pathway glycolipid biosynthesis; lipid IV(A) biosynthesis; lipid IV(A) from (3R)-3-hydroxytetradecanoyl-[acyl-carrier-protein] and UDP-N-acetyl-alpha-D-glucosamine: step 6/6. Its function is as follows. Transfers the gamma-phosphate of ATP to the 4'-position of a tetraacyldisaccharide 1-phosphate intermediate (termed DS-1-P) to form tetraacyldisaccharide 1,4'-bis-phosphate (lipid IVA). The protein is Tetraacyldisaccharide 4'-kinase of Campylobacter jejuni subsp. jejuni serotype O:6 (strain 81116 / NCTC 11828).